Here is a 372-residue protein sequence, read N- to C-terminus: Oxoglutarate-dependent flavonoid 7-O-demethylase 1 (372 aa).

The 101-residue stretch at 221-321 (GIQALRMNYY…RLSVAAFLNP (101 aa)) folds into the Fe2OG dioxygenase domain. Positions 245, 247, and 302 each coordinate Fe cation. Arg312 provides a ligand contact to 2-oxoglutarate.

This sequence belongs to the iron/ascorbate-dependent oxidoreductase family. Monomer. The cofactor is Fe(2+). It depends on L-ascorbate as a cofactor. Accumulates in the trichomes of nevadensin-accumulating strains (e.g. cv. SD and cv. EMX-1) and in cv. SW (at protein level) but not in cv. MC.

The protein localises to the cytoplasm. The catalysed reaction is gardenin B + 2-oxoglutarate + O2 = nevadensin + formaldehyde + succinate + CO2 + H(+). It catalyses the reaction 8-hydroxysalvigenin + 2-oxoglutarate + O2 = pilosin + formaldehyde + succinate + CO2. It functions in the pathway flavonoid metabolism. With respect to regulation, inhibited by prohexadione-calcium, a 2-oxoglutarate-dependent dioxygenase (2-ODD) inhibitor, thus leading to a decreased abundance of nevadensin (NEV) and absence of pilosin (PIL) production, but to the accumulation of gardenin B (GARD B) and 8-hydroxysalvigenin (8-OH-SALV). Oxoglutarate-dependent dioxygenase (2-ODD) acting as a flavonoid 7-O-demethylase involved in the biosynthesis of polymethoxylated flavonoids natural products such as nevadensin and salvigenin, aroma compounds which contribute to the flavor of sweet basil, and exhibit pharmacological activities such as anti-allergic, anti-oxidant, antibacterial, anti-proliferative, and anti-inflammatory effects. Catalyzes the 7-O-demethylation of methoxylated flavones; mediates the conversion of 8-hydroxysalvigenin (8-OH-SALV) to pilosin (PIL) and of gardenin B (GARD B) to nevadensin (NEV). The chain is Oxoglutarate-dependent flavonoid 7-O-demethylase 1 from Ocimum basilicum (Sweet basil).